Reading from the N-terminus, the 752-residue chain is Microtubule-associated protein tau (752 aa).

The segment at 1–567 (MAEPRQEFDT…PVPMPDLKNV (567 aa)) is disordered. N-acetylalanine is present on alanine 2. Tyrosine 18 is subject to Phosphotyrosine. Residue lysine 33 forms a Glycyl lysine isopeptide (Lys-Gly) (interchain with G-Cter in ubiquitin) linkage. Serine 35 and serine 50 each carry phosphoserine. Residues 50–60 (SETSDAKSTPT) show a composition bias toward polar residues. 3 positions are modified to phosphothreonine: threonine 58, threonine 60, and threonine 100. Residues 142–151 (SDWTHQQVPS) are compositionally biased toward polar residues. The span at 173 to 182 (RPEDVERSHP) shows a compositional bias: basic and acidic residues. Serine 191 and serine 204 each carry phosphoserine. Residues 192 to 204 (PQKEAWGKDRLGS) are compositionally biased toward basic and acidic residues. The segment covering 205 to 218 (EEEVDEDITMDESS) has biased composition (acidic residues). Over residues 219 to 229 (QESPPSQASLA) the composition is skewed to low complexity. Positions 233-252 (ATPQARSVSASGVSGETTSI) are enriched in polar residues. Composition is skewed to basic and acidic residues over residues 289–313 (EEGH…KEQD) and 374–385 (SKDRTGNDEKKA). 2 stretches are compositionally biased toward polar residues: residues 387–400 (TSTP…SNRP) and 432–446 (KYVS…SPGT). Position 464 is a phosphothreonine (threonine 464). Arginine 466 bears the Omega-N-methylarginine mark. The residue at position 474 (lysine 474) is an N6,N6-dimethyllysine; alternate. Lysine 474 is modified (N6-acetyllysine; alternate). Residues threonine 480, threonine 486, and threonine 487 each carry the phosphothreonine modification. The residue at position 489 (serine 489) is a Phosphoserine. Threonine 492 carries the post-translational modification Phosphothreonine. A phosphoserine mark is found at serine 496, serine 502, and serine 506. The segment covering 498 to 525 (EPPKSGERSGYSSPGSPGTPGSRSRTPS) has biased composition (low complexity). Tyrosine 508 is subject to Phosphotyrosine. Phosphoserine occurs at positions 509 and 510. Serine 513 bears the Phosphoserine; by CK1, PDPK1 and TTBK1 mark. A phosphothreonine mark is found at threonine 516 and threonine 523. The residue at position 525 (serine 525) is a Phosphoserine. Phosphothreonine is present on threonine 528. Lysine 536 is subject to N6-acetyllysine. At threonine 542 the chain carries Phosphothreonine. Phosphoserine is present on residues serine 546 and serine 548. Tau/MAP repeat units lie at residues 555-585 (QTAP…GGGK), 586-616 (VQII…GGGS), 617-647 (VHIV…GGGQ), and 648-679 (VEVK…GGGN). Lysine 565 participates in a covalent cross-link: Glycyl lysine isopeptide (Lys-Gly) (interchain with G-Cter in ubiquitin). Lysine 570 carries the post-translational modification N6-acetyllysine; alternate. Lysine 570 is modified (N6-methyllysine; alternate). Lysine 570 participates in a covalent cross-link: Glycyl lysine isopeptide (Lys-Gly) (interchain with G-Cter in ubiquitin); alternate. Serine 573 carries the post-translational modification Phosphoserine. Lysine 578 participates in a covalent cross-link: Glycyl lysine isopeptide (Lys-Gly) (interchain with G-Cter in ubiquitin). Lysine 592 carries the N6-acetyllysine; alternate modification. Lysine 592 participates in a covalent cross-link: Glycyl lysine isopeptide (Lys-Gly) (interchain with G-Cter in ubiquitin); alternate. Residues serine 596 and serine 600 each carry the phosphoserine modification. Residue lysine 601 is modified to N6-acetyllysine. Cysteine 602 and cysteine 633 form a disulfide bridge. Serine 604 bears the Phosphoserine mark. Lysine 609 carries the N6-acetyllysine; alternate modification. Lysine 609 is covalently cross-linked (Glycyl lysine isopeptide (Lys-Gly) (interchain with G-Cter in ubiquitin); alternate). Serine 616 carries the phosphoserine modification. Position 622 is an N6,N6-dimethyllysine; alternate (lysine 622). N6-acetyllysine; alternate occurs at positions 622, 628, and 632. Glycyl lysine isopeptide (Lys-Gly) (interchain with G-Cter in ubiquitin); alternate cross-links involve residues lysine 622, lysine 628, and lysine 632. Serine 635 bears the Phosphoserine mark. Residues lysine 642, lysine 654, and lysine 658 each carry the N6-acetyllysine; alternate modification. Residues lysine 642, lysine 654, and lysine 658 each participate in a glycyl lysine isopeptide (Lys-Gly) (interchain with G-Cter in ubiquitin); alternate cross-link. Arginine 660 is modified (omega-N-methylarginine). A Phosphoserine modification is found at serine 663. A Glycyl lysine isopeptide (Lys-Gly) (interchain with G-Cter in ubiquitin) cross-link involves residue lysine 664. Residue serine 667 is modified to Phosphoserine. Residue lysine 680 is modified to N6-acetyllysine; alternate. Lysine 680 participates in a covalent cross-link: Glycyl lysine isopeptide (Lys-Gly) (interchain with G-Cter in ubiquitin); alternate. Residue lysine 686 forms a Glycyl lysine isopeptide (Lys-Gly) (interchain with G-Cter in ubiquitin) linkage. An N6-acetyllysine; alternate modification is found at lysine 696. Lysine 696 is covalently cross-linked (Glycyl lysine isopeptide (Lys-Gly) (interchain with G-Cter in ubiquitin); alternate). Tyrosine 705 carries the post-translational modification Phosphotyrosine. A Phosphoserine; by CK1 and PDPK1 modification is found at serine 707. Serine 711 carries the post-translational modification Phosphoserine. Threonine 714 carries the phosphothreonine modification. Position 715 is a phosphoserine; by CK1 and PDPK1 (serine 715). 3 positions are modified to phosphoserine: serine 720, serine 727, and serine 733. Threonine 738 bears the Phosphothreonine mark.

Interacts with MARK1, MARK2, MARK3 and MARK4. Interacts with SQSTM1 when polyubiquitinated. Interacts with PSMC2 through SQSTM1. Interacts with FKBP4. Binds to CSNK1D. Interacts with SGK1. Interacts with EPM2A; the interaction dephosphorylates MAPT at Ser-388. Interacts with PIN1. Interacts with LRRK2. Interacts with LRP1, leading to endocytosis; this interaction is reduced in the presence of LRPAP1/RAP. Post-translationally, polyubiquitinated. Requires functional TRAF6 and may provoke SQSTM1-dependent degradation by the proteasome. Phosphorylated at various serine and threonine residues in S-P or T-P motifs by proline-directed protein kinases (PDPK1, CDK1, CDK5, GSK3, MAPK) (a few sites per protein in interphase, more in mitosis), and at serine residues in K-X-G-S motifs by MAP/microtubule affinity-regulating kinase (MARK1, MARK2, MARK3, MARK4), causing detachment from microtubules, and their disassembly. Fetal Tau is much more phosphorylated than adult Tau. Phosphorylation at Ser-573 by BRSK1 and BRSK2 in neurons affects ability to bind microtubules and plays a role in neuron polarization. Phosphorylated by PHK. Dephosphorylation at several serine and threonine residues by the serine/threonine phosphatase PPP5C. Phosphorylation at Ser-204 by SGK1 mediates microtubule depolymerization and neurite formation in hippocampal neurons. As to expression, expressed in neurons. The larger forms (isoform tau-A and isoform tau-B) are preferentially expressed in the peripheral nervous system while the other are expressed in the central nervous system. Low amounts of the larger forms are also found in limited areas of the CNS.

It is found in the cytoplasm. The protein localises to the cytosol. Its subcellular location is the cell membrane. The protein resides in the cytoskeleton. It localises to the cell projection. It is found in the axon. The protein localises to the dendrite. Its subcellular location is the secreted. In terms of biological role, promotes microtubule assembly and stability, and might be involved in the establishment and maintenance of neuronal polarity. The C-terminus binds axonal microtubules while the N-terminus binds neural plasma membrane components, suggesting that tau functions as a linker protein between both. Axonal polarity is predetermined by tau localization (in the neuronal cell) in the domain of the cell body defined by the centrosome. The short isoforms allow plasticity of the cytoskeleton whereas the longer isoforms may preferentially play a role in its stabilization. This Rattus norvegicus (Rat) protein is Microtubule-associated protein tau.